A 735-amino-acid chain; its full sequence is Funoran endo-beta-hydrolase (735 aa).

Positions 1 to 27 (MRVKSVYKKLSVSFILVMLSASQEVNS) are cleaved as a signal peptide. Glu200 functions as the Proton donor in the catalytic mechanism. The active-site Nucleophile is Glu322.

This sequence belongs to the glycosyl hydrolase 86 family.

The enzyme catalyses Endohydrolysis of beta-(1-&gt;4)-linkages between beta-D-galactopyranose-6-sulfate and 3,6-anhydro-alpha-L-galactopyranose units in funoran.. It catalyses the reaction Hydrolysis of (1-&gt;4)-beta-D-galactosidic linkages in agarose, giving the tetramer as the predominant product.. Its activity is regulated as follows. Agarase activity is enhanced in the presence of NaCl. Agarase activity is significantly inhibited by Zn(2+) and slightly activated by several divalent ions including Mg(2+), Cd(2+) and Ca(2+). Functionally, endohydrolase that cleaves the beta-1,4 glycosidic bond between beta-D-galactopyranose-6-sulfate (G6S) and 3,6-anhydro-alpha-L-galactopyranose (LA) unit of funoran, a polysaccharide produced by red algae of the genus Gloiopeltis. It releases the disaccharide LA-G6S as the predominant end product. Also acts as a random endo-acting beta-agarase, which can hydrolyze agarose tetrasaccharides and hexasaccharides, and produces disaccharides as smallest products. Besides typical agarose oligosaccharides, it can use methylated galactoses. The enzyme exhibits higher catalytic efficiency towards agarose, but binds funoran preferentially. Has no activity on porphyran. The chain is Funoran endo-beta-hydrolase from Wenyingzhuangia aestuarii.